A 353-amino-acid polypeptide reads, in one-letter code: Phosphoribosylformylglycinamidine cyclo-ligase (353 aa).

The protein belongs to the AIR synthase family.

It localises to the cytoplasm. It carries out the reaction 2-formamido-N(1)-(5-O-phospho-beta-D-ribosyl)acetamidine + ATP = 5-amino-1-(5-phospho-beta-D-ribosyl)imidazole + ADP + phosphate + H(+). It functions in the pathway purine metabolism; IMP biosynthesis via de novo pathway; 5-amino-1-(5-phospho-D-ribosyl)imidazole from N(2)-formyl-N(1)-(5-phospho-D-ribosyl)glycinamide: step 2/2. The sequence is that of Phosphoribosylformylglycinamidine cyclo-ligase from Methylocella silvestris (strain DSM 15510 / CIP 108128 / LMG 27833 / NCIMB 13906 / BL2).